We begin with the raw amino-acid sequence, 271 residues long: Tryptophan synthase alpha chain (271 aa).

Catalysis depends on proton acceptor residues glutamate 56 and aspartate 67.

It belongs to the TrpA family. In terms of assembly, tetramer of two alpha and two beta chains.

The enzyme catalyses (1S,2R)-1-C-(indol-3-yl)glycerol 3-phosphate + L-serine = D-glyceraldehyde 3-phosphate + L-tryptophan + H2O. Its pathway is amino-acid biosynthesis; L-tryptophan biosynthesis; L-tryptophan from chorismate: step 5/5. In terms of biological role, the alpha subunit is responsible for the aldol cleavage of indoleglycerol phosphate to indole and glyceraldehyde 3-phosphate. The sequence is that of Tryptophan synthase alpha chain from Mycobacterium avium (strain 104).